Reading from the N-terminus, the 61-residue chain is Large ribosomal subunit protein bL28A (61 aa).

The protein belongs to the bacterial ribosomal protein bL28 family.

This Streptomyces coelicolor (strain ATCC BAA-471 / A3(2) / M145) protein is Large ribosomal subunit protein bL28A (rpmB1).